The sequence spans 477 residues: tRNA-2-methylthio-N(6)-dimethylallyladenosine synthase (477 aa).

An MTTase N-terminal domain is found at 9-129 (RKLHIKSYGC…LPQLLARAKT (121 aa)). Residues Cys-18, Cys-54, Cys-92, Cys-170, Cys-174, and Cys-177 each contribute to the [4Fe-4S] cluster site. The 231-residue stretch at 156 to 386 (RSRGISAFVT…QLQNLIDSQQ (231 aa)) folds into the Radical SAM core domain. Positions 391 to 453 (RTALGRTIDV…RYSLFGTLAS (63 aa)) constitute a TRAM domain. The tract at residues 454 to 477 (KPTSGEPSNHAATGGAQFQTTAGA) is disordered. The segment covering 464–477 (AATGGAQFQTTAGA) has biased composition (low complexity).

It belongs to the methylthiotransferase family. MiaB subfamily. Monomer. It depends on [4Fe-4S] cluster as a cofactor.

It localises to the cytoplasm. It carries out the reaction N(6)-dimethylallyladenosine(37) in tRNA + (sulfur carrier)-SH + AH2 + 2 S-adenosyl-L-methionine = 2-methylsulfanyl-N(6)-dimethylallyladenosine(37) in tRNA + (sulfur carrier)-H + 5'-deoxyadenosine + L-methionine + A + S-adenosyl-L-homocysteine + 2 H(+). Catalyzes the methylthiolation of N6-(dimethylallyl)adenosine (i(6)A), leading to the formation of 2-methylthio-N6-(dimethylallyl)adenosine (ms(2)i(6)A) at position 37 in tRNAs that read codons beginning with uridine. The polypeptide is tRNA-2-methylthio-N(6)-dimethylallyladenosine synthase (Nitrobacter winogradskyi (strain ATCC 25391 / DSM 10237 / CIP 104748 / NCIMB 11846 / Nb-255)).